We begin with the raw amino-acid sequence, 103 residues long: NADH-quinone oxidoreductase subunit K (103 aa).

Helical transmembrane passes span 6 to 26, 32 to 52, and 63 to 83; these read LAHY…GIFL, IVLL…FVAF, and VFVF…LAIL.

This sequence belongs to the complex I subunit 4L family. As to quaternary structure, NDH-1 is composed of 14 different subunits. Subunits NuoA, H, J, K, L, M, N constitute the membrane sector of the complex.

The protein localises to the cell inner membrane. The catalysed reaction is a quinone + NADH + 5 H(+)(in) = a quinol + NAD(+) + 4 H(+)(out). Functionally, NDH-1 shuttles electrons from NADH, via FMN and iron-sulfur (Fe-S) centers, to quinones in the respiratory chain. The immediate electron acceptor for the enzyme in this species is believed to be ubiquinone. Couples the redox reaction to proton translocation (for every two electrons transferred, four hydrogen ions are translocated across the cytoplasmic membrane), and thus conserves the redox energy in a proton gradient. This is NADH-quinone oxidoreductase subunit K from Ralstonia pickettii (strain 12D).